Reading from the N-terminus, the 75-residue chain is DNA-directed RNA polymerase subunit omega (75 aa).

The protein belongs to the RNA polymerase subunit omega family. As to quaternary structure, in cyanobacteria the RNAP catalytic core is composed of 2 alpha, 1 beta, 1 beta', 1 gamma and 1 omega subunit. When a sigma factor is associated with the core the holoenzyme is formed, which can initiate transcription.

The catalysed reaction is RNA(n) + a ribonucleoside 5'-triphosphate = RNA(n+1) + diphosphate. Promotes RNA polymerase assembly. Latches the N- and C-terminal regions of the beta' subunit thereby facilitating its interaction with the beta and alpha subunits. This Prochlorococcus marinus (strain MIT 9313) protein is DNA-directed RNA polymerase subunit omega.